A 178-amino-acid chain; its full sequence is Protein GrpE (178 aa).

A compositionally biased stretch (basic and acidic residues) spans 1–11 (MAEDQAPREET). Residues 1-30 (MAEDQAPREETVEAPELTEAPEIDELETLR) are disordered.

The protein belongs to the GrpE family. In terms of assembly, homodimer.

It is found in the cytoplasm. Participates actively in the response to hyperosmotic and heat shock by preventing the aggregation of stress-denatured proteins, in association with DnaK and GrpE. It is the nucleotide exchange factor for DnaK and may function as a thermosensor. Unfolded proteins bind initially to DnaJ; upon interaction with the DnaJ-bound protein, DnaK hydrolyzes its bound ATP, resulting in the formation of a stable complex. GrpE releases ADP from DnaK; ATP binding to DnaK triggers the release of the substrate protein, thus completing the reaction cycle. Several rounds of ATP-dependent interactions between DnaJ, DnaK and GrpE are required for fully efficient folding. The chain is Protein GrpE from Cereibacter sphaeroides (strain ATCC 17023 / DSM 158 / JCM 6121 / CCUG 31486 / LMG 2827 / NBRC 12203 / NCIMB 8253 / ATH 2.4.1.) (Rhodobacter sphaeroides).